The chain runs to 576 residues: Putative pentatricopeptide repeat-containing protein At5g47460 (576 aa).

PPR repeat units lie at residues S20 to P53, D54 to S88, N89 to P119, D120 to P154, N155 to K189, N191 to S225, W226 to P252, D253 to S287, W288 to F318, D319 to S353, R354 to K384, N385 to K419, D421 to E452, and S458 to G488. The tract at residues A493–R570 is type E motif.

It belongs to the PPR family. PCMP-E subfamily.

The protein is Putative pentatricopeptide repeat-containing protein At5g47460 (PCMP-E103) of Arabidopsis thaliana (Mouse-ear cress).